Consider the following 555-residue polypeptide: Glutamine--tRNA ligase (555 aa).

A 'HIGH' region motif is present at residues Pro34–His44. ATP-binding positions include Glu35–Asn37 and His41–Ser47. L-glutamine is bound by residues Asp67 and Tyr212. ATP-binding positions include Thr231, Arg261–Leu262, and Leu269–Lys271. The short motif at Val268 to Arg272 is the 'KMSKS' region element.

Belongs to the class-I aminoacyl-tRNA synthetase family. As to quaternary structure, monomer.

The protein localises to the cytoplasm. It catalyses the reaction tRNA(Gln) + L-glutamine + ATP = L-glutaminyl-tRNA(Gln) + AMP + diphosphate. The protein is Glutamine--tRNA ligase of Alteromonas mediterranea (strain DSM 17117 / CIP 110805 / LMG 28347 / Deep ecotype).